The chain runs to 348 residues: MDFRNVQLPREIHSGSGIIEEIGDVCDNLLPKKDVTILTGPTTKKIAGNHVIEILKESNYEISEITVNLATEESVEEVVKDSKDSSAILGVGGGKVIDVAKMASTINHIPLISVPTTAAHDGMASPRASIKNDKGTVSLKANAPFALIADTTIISQAPYRFTAAGFSDIISNLTAVEDWKLAYKLINEPFSDSAAALSVMTAKLLIDEADNIHPNNENSASVVVKGLISSGMAISIAGNSRPASGSEHKFSHALDMIAPKPALHGEQCGVGTIMMMYLQGGDWQNIKSVLEKVNAPTTAKELGIDEEYIIEALIQAHNIRKERYTILGDRGLTREAAENIALKTHVIE.

Residues 94-98 and Thr116 each bind NAD(+); that span reads GKVID. Asp121 is a binding site for substrate. Position 125 (Ser125) interacts with NAD(+). Asp168 provides a ligand contact to substrate. Zn(2+) is bound by residues Asp168 and His248. Substrate is bound at residue His252. His264 is a binding site for Zn(2+).

The protein belongs to the glycerol-1-phosphate dehydrogenase family. Homooctamer. Zn(2+) serves as cofactor.

Its subcellular location is the cytoplasm. The enzyme catalyses sn-glycerol 1-phosphate + NAD(+) = dihydroxyacetone phosphate + NADH + H(+). The catalysed reaction is sn-glycerol 1-phosphate + NADP(+) = dihydroxyacetone phosphate + NADPH + H(+). The protein operates within membrane lipid metabolism; glycerophospholipid metabolism. Its function is as follows. Catalyzes the NAD(P)H-dependent reduction of dihydroxyacetonephosphate (DHAP or glycerone phosphate) to glycerol 1-phosphate (G1P). The G1P thus generated is used as the glycerophosphate backbone of phospholipids in the cellular membranes of Archaea. In Methanosphaera stadtmanae (strain ATCC 43021 / DSM 3091 / JCM 11832 / MCB-3), this protein is Glycerol-1-phosphate dehydrogenase [NAD(P)+].